Here is a 481-residue protein sequence, read N- to C-terminus: Pyruvate kinase (481 aa).

Position 36 (arginine 36) interacts with substrate. Residues asparagine 38, serine 40, and aspartate 70 each coordinate K(+). 38–41 (NFSH) contributes to the ATP binding site. Arginine 77 and lysine 160 together coordinate ATP. Glutamate 225 contributes to the Mg(2+) binding site. 3 residues coordinate substrate: glycine 251, aspartate 252, and threonine 284. Aspartate 252 provides a ligand contact to Mg(2+).

The protein belongs to the pyruvate kinase family. In terms of assembly, homotetramer. It depends on Mg(2+) as a cofactor. K(+) serves as cofactor.

It catalyses the reaction pyruvate + ATP = phosphoenolpyruvate + ADP + H(+). The protein operates within carbohydrate degradation; glycolysis; pyruvate from D-glyceraldehyde 3-phosphate: step 5/5. Its activity is regulated as follows. Allosterically activated by AMP and by several sugar phosphates. Belongs to type II PK. This is Pyruvate kinase (pykA) from Buchnera aphidicola subsp. Schizaphis graminum (strain Sg).